Consider the following 548-residue polypeptide: Probable malate:quinone oxidoreductase (548 aa).

The segment at Asp521–Leu548 is disordered. Residues Pro530–Lys541 are compositionally biased toward low complexity.

It belongs to the MQO family. FAD serves as cofactor.

The catalysed reaction is (S)-malate + a quinone = a quinol + oxaloacetate. It participates in carbohydrate metabolism; tricarboxylic acid cycle; oxaloacetate from (S)-malate (quinone route): step 1/1. The protein is Probable malate:quinone oxidoreductase of Escherichia coli (strain 55989 / EAEC).